A 504-amino-acid chain; its full sequence is ATP synthase subunit alpha 1 (504 aa).

170-177 (GDRQIGKT) contributes to the ATP binding site.

The protein belongs to the ATPase alpha/beta chains family. In terms of assembly, F-type ATPases have 2 components, CF(1) - the catalytic core - and CF(0) - the membrane proton channel. CF(1) has five subunits: alpha(3), beta(3), gamma(1), delta(1), epsilon(1). CF(0) has three main subunits: a(1), b(2) and c(9-12). The alpha and beta chains form an alternating ring which encloses part of the gamma chain. CF(1) is attached to CF(0) by a central stalk formed by the gamma and epsilon chains, while a peripheral stalk is formed by the delta and b chains.

The protein resides in the cell inner membrane. It catalyses the reaction ATP + H2O + 4 H(+)(in) = ADP + phosphate + 5 H(+)(out). Produces ATP from ADP in the presence of a proton gradient across the membrane. The alpha chain is a regulatory subunit. The sequence is that of ATP synthase subunit alpha 1 from Syntrophus aciditrophicus (strain SB).